The sequence spans 547 residues: Probable acetolactate synthase (547 aa).

Thiamine diphosphate is bound at residue E57. FAD contacts are provided by residues P159 and 299 to 318 (DRVE…LYGD). The thiamine pyrophosphate binding stretch occupies residues 388-468 (DFGSYAGRMI…VVSVIGNNGI (81 aa)). 2 residues coordinate Mg(2+): D439 and N466.

It belongs to the TPP enzyme family. Mg(2+) serves as cofactor. Requires thiamine diphosphate as cofactor.

It catalyses the reaction 2 pyruvate + H(+) = (2S)-2-acetolactate + CO2. The protein operates within amino-acid biosynthesis; L-isoleucine biosynthesis; L-isoleucine from 2-oxobutanoate: step 1/4. It functions in the pathway amino-acid biosynthesis; L-valine biosynthesis; L-valine from pyruvate: step 1/4. This chain is Probable acetolactate synthase (ilvG), found in Mycobacterium bovis (strain ATCC BAA-935 / AF2122/97).